An 89-amino-acid polypeptide reads, in one-letter code: Small ribosomal subunit protein uS15 (89 aa).

It belongs to the universal ribosomal protein uS15 family. In terms of assembly, part of the 30S ribosomal subunit. Forms a bridge to the 50S subunit in the 70S ribosome, contacting the 23S rRNA.

Its function is as follows. One of the primary rRNA binding proteins, it binds directly to 16S rRNA where it helps nucleate assembly of the platform of the 30S subunit by binding and bridging several RNA helices of the 16S rRNA. Functionally, forms an intersubunit bridge (bridge B4) with the 23S rRNA of the 50S subunit in the ribosome. This is Small ribosomal subunit protein uS15 from Escherichia coli O139:H28 (strain E24377A / ETEC).